Here is an 88-residue protein sequence, read N- to C-terminus: UPF0367 protein Synpcc7942_1638 (88 aa).

Belongs to the UPF0367 family.

This chain is UPF0367 protein Synpcc7942_1638, found in Synechococcus elongatus (strain ATCC 33912 / PCC 7942 / FACHB-805) (Anacystis nidulans R2).